The primary structure comprises 224 residues: ATP-dependent Clp protease proteolytic subunit 1 (224 aa).

Residue Ser-120 is the Nucleophile of the active site. Residue His-145 is part of the active site.

The protein belongs to the peptidase S14 family. Fourteen ClpP subunits assemble into 2 heptameric rings which stack back to back to give a disk-like structure with a central cavity, resembling the structure of eukaryotic proteasomes.

The protein localises to the cytoplasm. It catalyses the reaction Hydrolysis of proteins to small peptides in the presence of ATP and magnesium. alpha-casein is the usual test substrate. In the absence of ATP, only oligopeptides shorter than five residues are hydrolyzed (such as succinyl-Leu-Tyr-|-NHMec, and Leu-Tyr-Leu-|-Tyr-Trp, in which cleavage of the -Tyr-|-Leu- and -Tyr-|-Trp bonds also occurs).. In terms of biological role, cleaves peptides in various proteins in a process that requires ATP hydrolysis. Has a chymotrypsin-like activity. Plays a major role in the degradation of misfolded proteins. In Prochlorococcus marinus (strain MIT 9313), this protein is ATP-dependent Clp protease proteolytic subunit 1.